The chain runs to 194 residues: RFKKIRRLGALPGLTSKRPRSGSDLKNQLRSGKRSQYRIRLEEKQKLRFHYGLTERQLLKYVHMAGKAKGSTGQVLLQLLEMRLDNILFRLGMASTIPGARQLVNHRHILVNGRIVDIPSYRCKPRDIITTKDKERSKVLIQNYIASSSHEELPNHLTIDPLQYKGLVNQIIDSKWVGLKINELLVVEYYSRQT.

One can recognise an S4 RNA-binding domain in the interval Met82–Asn143.

It belongs to the universal ribosomal protein uS4 family. In terms of assembly, part of the 30S ribosomal subunit. Contacts protein S5. The interaction surface between S4 and S5 is involved in control of translational fidelity.

It is found in the plastid. The protein localises to the chloroplast. One of the primary rRNA binding proteins, it binds directly to 16S rRNA where it nucleates assembly of the body of the 30S subunit. Functionally, with S5 and S12 plays an important role in translational accuracy. The sequence is that of Small ribosomal subunit protein uS4c (rps4) from Cypella sp. (strain Porto Alegre 027).